Here is a 268-residue protein sequence, read N- to C-terminus: Tryptophan synthase alpha chain (268 aa).

Catalysis depends on proton acceptor residues Glu-49 and Asp-60.

It belongs to the TrpA family. In terms of assembly, tetramer of two alpha and two beta chains.

It catalyses the reaction (1S,2R)-1-C-(indol-3-yl)glycerol 3-phosphate + L-serine = D-glyceraldehyde 3-phosphate + L-tryptophan + H2O. It participates in amino-acid biosynthesis; L-tryptophan biosynthesis; L-tryptophan from chorismate: step 5/5. Its function is as follows. The alpha subunit is responsible for the aldol cleavage of indoleglycerol phosphate to indole and glyceraldehyde 3-phosphate. In Shigella flexneri serotype 5b (strain 8401), this protein is Tryptophan synthase alpha chain.